A 350-amino-acid polypeptide reads, in one-letter code: Methionine import ATP-binding protein MetN (350 aa).

An ABC transporter domain is found at 2–242; that stretch reads IELKGISQHF…PRHDVTRALI (241 aa). Position 39–46 (39–46) interacts with ATP; it reads GRSGAGKS.

The protein belongs to the ABC transporter superfamily. Methionine importer (TC 3.A.1.24) family. The complex is composed of two ATP-binding proteins (MetN), two transmembrane proteins (MetI) and a solute-binding protein (MetQ).

The protein resides in the cell inner membrane. The enzyme catalyses L-methionine(out) + ATP + H2O = L-methionine(in) + ADP + phosphate + H(+). It carries out the reaction D-methionine(out) + ATP + H2O = D-methionine(in) + ADP + phosphate + H(+). Part of the ABC transporter complex MetNIQ involved in methionine import. Responsible for energy coupling to the transport system. The sequence is that of Methionine import ATP-binding protein MetN from Ralstonia nicotianae (strain ATCC BAA-1114 / GMI1000) (Ralstonia solanacearum).